A 240-amino-acid chain; its full sequence is UDP-2,3-diacylglucosamine hydrolase (240 aa).

Aspartate 8, histidine 10, aspartate 41, asparagine 79, and histidine 114 together coordinate Mn(2+). 79 to 80 is a substrate binding site; sequence NR. Substrate contacts are provided by aspartate 122, serine 160, asparagine 164, lysine 167, and histidine 195. Mn(2+)-binding residues include histidine 195 and histidine 197.

This sequence belongs to the LpxH family. Mn(2+) is required as a cofactor.

The protein resides in the cell inner membrane. It catalyses the reaction UDP-2-N,3-O-bis[(3R)-3-hydroxytetradecanoyl]-alpha-D-glucosamine + H2O = 2-N,3-O-bis[(3R)-3-hydroxytetradecanoyl]-alpha-D-glucosaminyl 1-phosphate + UMP + 2 H(+). Its pathway is glycolipid biosynthesis; lipid IV(A) biosynthesis; lipid IV(A) from (3R)-3-hydroxytetradecanoyl-[acyl-carrier-protein] and UDP-N-acetyl-alpha-D-glucosamine: step 4/6. In terms of biological role, hydrolyzes the pyrophosphate bond of UDP-2,3-diacylglucosamine to yield 2,3-diacylglucosamine 1-phosphate (lipid X) and UMP by catalyzing the attack of water at the alpha-P atom. Involved in the biosynthesis of lipid A, a phosphorylated glycolipid that anchors the lipopolysaccharide to the outer membrane of the cell. This chain is UDP-2,3-diacylglucosamine hydrolase, found in Escherichia coli (strain SE11).